The sequence spans 508 residues: Phenylacetaldehyde synthase (508 aa).

L-phenylalanine-binding residues include histidine 203 and histidine 318. Lysine 319 is subject to N6-(pyridoxal phosphate)lysine. Phenylalanine 348 serves as a coordination point for L-phenylalanine.

The protein belongs to the group II decarboxylase family. In terms of assembly, homotetramer. The cofactor is pyridoxal 5'-phosphate.

The enzyme catalyses L-phenylalanine + O2 + H2O + H(+) = 2-phenylacetaldehyde + H2O2 + NH4(+) + CO2. Its function is as follows. Bifunctional enzyme that catalyzes the decarboxylation of L-phenylalanine to produce 2-phenylethylamine, which is then oxidized to form 2-phenylacetaldehyde, a constituent of floral scent in petals. 2-phenylacetaldehyde is a precursor of 2-phenylethanol, another constituent of floral scent in petals. The sequence is that of Phenylacetaldehyde synthase from Rosa hybrid cultivar.